We begin with the raw amino-acid sequence, 491 residues long: Glucose-6-phosphate 1-dehydrogenase (491 aa).

NADP(+) contacts are provided by residues R49, 91–92, and K146; that span reads DV. Positions 176, 180, 214, and 233 each coordinate substrate. The Proton acceptor role is filled by H238. 2 residues coordinate substrate: K338 and K343.

This sequence belongs to the glucose-6-phosphate dehydrogenase family.

The enzyme catalyses D-glucose 6-phosphate + NADP(+) = 6-phospho-D-glucono-1,5-lactone + NADPH + H(+). The protein operates within carbohydrate degradation; pentose phosphate pathway; D-ribulose 5-phosphate from D-glucose 6-phosphate (oxidative stage): step 1/3. Its function is as follows. Catalyzes the oxidation of glucose 6-phosphate to 6-phosphogluconolactone. The protein is Glucose-6-phosphate 1-dehydrogenase of Buchnera aphidicola subsp. Acyrthosiphon pisum (strain APS) (Acyrthosiphon pisum symbiotic bacterium).